Reading from the N-terminus, the 390-residue chain is Alpha-2B adrenergic receptor (390 aa).

The chain crosses the membrane as a helical span at residues 1–25 (AIATVITFLILFTIFGNSLVILAVL). Topologically, residues 26–36 (TSRSLRAPQNL) are cytoplasmic. The helical transmembrane segment at 37 to 62 (FLVSLAAADIMVATLIIPFSLANELL) threads the bilayer. The Extracellular portion of the chain corresponds to 63–72 (GYWYFRRTWC). Cys72 and Cys151 are disulfide-bonded. A helical transmembrane segment spans residues 73–95 (EVYLALDVLFCTSSIVHLCAISL). Topologically, residues 96–117 (DRYWAVSRALEYNSKRTPRRIK) are cytoplasmic. A helical membrane pass occupies residues 118 to 140 (CIILTVWLIAAAISLPPLIYKGD). The Extracellular portion of the chain corresponds to 141–156 (QGPQPRGRPQCKLNQE). A helical membrane pass occupies residues 157–180 (AWYILSSSIGSFFAPCLIMILVYL). The Cytoplasmic segment spans residues 181-354 (RIYLIAKRSH…LTREKRFTFV (174 aa)). 2 disordered regions span residues 191-218 (RRGP…PSAL) and 233-311 (EANG…PLQQ). Residues 280 to 292 (LEEEADKEEEEEC) are compositionally biased toward acidic residues. A helical membrane pass occupies residues 355 to 378 (LAVVIGVFVLCWFPFFFSYSLGAI). Residues 379 to 390 (CPQHCKVPHGLF) lie on the Extracellular side of the membrane.

It belongs to the G-protein coupled receptor 1 family. Adrenergic receptor subfamily. ADRA2B sub-subfamily. Interacts with RAB26. Interacts with PPP1R9B. Interacts with GGA1, GGA2 and GGA3.

It is found in the cell membrane. In terms of biological role, alpha-2 adrenergic receptors mediate the catecholamine-induced inhibition of adenylate cyclase through the action of G proteins. The protein is Alpha-2B adrenergic receptor (ADRA2B) of Dugong dugon (Dugong).